Reading from the N-terminus, the 305-residue chain is Phosphopantetheine adenylyltransferase (305 aa).

The protein belongs to the eukaryotic CoaD family.

Its subcellular location is the cytoplasm. It is found in the nucleus. It carries out the reaction (R)-4'-phosphopantetheine + ATP + H(+) = 3'-dephospho-CoA + diphosphate. Its function is as follows. Reversibly transfers an adenylyl group from ATP to 4'-phosphopantetheine, yielding dephospho-CoA (dPCoA) and pyrophosphate. Plays a role in the physiological regulation of the intracellular CoA concentration. This Saccharomyces cerevisiae (strain ATCC 204508 / S288c) (Baker's yeast) protein is Phosphopantetheine adenylyltransferase (CAB4).